A 255-amino-acid polypeptide reads, in one-letter code: uncharacterized protein (255 aa).

A signal peptide spans 1-23; the sequence is MKRLNKLVLGINLLFLVISITAG. A lipid anchor (N-palmitoyl cysteine) is attached at C24. C24 carries S-diacylglycerol cysteine lipidation.

It belongs to the staphylococcal tandem lipoprotein family.

The protein localises to the cell membrane. This is an uncharacterized protein from Staphylococcus aureus (strain MRSA252).